A 96-amino-acid chain; its full sequence is Integration host factor subunit beta (96 aa).

It belongs to the bacterial histone-like protein family. As to quaternary structure, heterodimer of an alpha and a beta chain.

This protein is one of the two subunits of integration host factor, a specific DNA-binding protein that functions in genetic recombination as well as in transcriptional and translational control. In Methylocella silvestris (strain DSM 15510 / CIP 108128 / LMG 27833 / NCIMB 13906 / BL2), this protein is Integration host factor subunit beta.